Here is a 333-residue protein sequence, read N- to C-terminus: Beta-ketoacyl-[acyl-carrier-protein] synthase III (333 aa).

Catalysis depends on residues Cys116 and His258. The ACP-binding stretch occupies residues 259 to 263; the sequence is QANQR. Asn288 is an active-site residue.

Belongs to the thiolase-like superfamily. FabH family. As to quaternary structure, homodimer.

Its subcellular location is the cytoplasm. It catalyses the reaction malonyl-[ACP] + acetyl-CoA + H(+) = 3-oxobutanoyl-[ACP] + CO2 + CoA. Its pathway is lipid metabolism; fatty acid biosynthesis. In terms of biological role, catalyzes the condensation reaction of fatty acid synthesis by the addition to an acyl acceptor of two carbons from malonyl-ACP. Catalyzes the first condensation reaction which initiates fatty acid synthesis and may therefore play a role in governing the total rate of fatty acid production. Possesses both acetoacetyl-ACP synthase and acetyl transacylase activities. Its substrate specificity determines the biosynthesis of branched-chain and/or straight-chain of fatty acids. The protein is Beta-ketoacyl-[acyl-carrier-protein] synthase III of Microcystis aeruginosa (strain NIES-843 / IAM M-2473).